We begin with the raw amino-acid sequence, 158 residues long: NAD(P)H-quinone oxidoreductase subunit J, chloroplastic (158 aa).

The protein belongs to the complex I 30 kDa subunit family. In terms of assembly, NDH is composed of at least 16 different subunits, 5 of which are encoded in the nucleus.

The protein resides in the plastid. It localises to the chloroplast thylakoid membrane. The enzyme catalyses a plastoquinone + NADH + (n+1) H(+)(in) = a plastoquinol + NAD(+) + n H(+)(out). It catalyses the reaction a plastoquinone + NADPH + (n+1) H(+)(in) = a plastoquinol + NADP(+) + n H(+)(out). Its function is as follows. NDH shuttles electrons from NAD(P)H:plastoquinone, via FMN and iron-sulfur (Fe-S) centers, to quinones in the photosynthetic chain and possibly in a chloroplast respiratory chain. The immediate electron acceptor for the enzyme in this species is believed to be plastoquinone. Couples the redox reaction to proton translocation, and thus conserves the redox energy in a proton gradient. The polypeptide is NAD(P)H-quinone oxidoreductase subunit J, chloroplastic (Crucihimalaya wallichii (Rock-cress)).